Reading from the N-terminus, the 156-residue chain is Small ribosomal subunit protein uS7 (156 aa).

The protein belongs to the universal ribosomal protein uS7 family. As to quaternary structure, part of the 30S ribosomal subunit. Contacts proteins S9 and S11.

Functionally, one of the primary rRNA binding proteins, it binds directly to 16S rRNA where it nucleates assembly of the head domain of the 30S subunit. Is located at the subunit interface close to the decoding center, probably blocks exit of the E-site tRNA. This is Small ribosomal subunit protein uS7 from Thiobacillus denitrificans (strain ATCC 25259 / T1).